The chain runs to 354 residues: MKKTSTRLADGRELVYYDLRDDTVRDAVDRRPLERTVTTSEVRRDPLLGDSAPSRLAPQGRTYHPPADQCPLCPSGRGTAERDPAYDVVVFENRFPSLAGDSGRCEVVCFTSDHDASFADLSEEQARLVVDAWTDRTSELSHLPSVEQVFCFENRGAEIGVTLGHPHGQIYAYPFTTPRTALMLRSLAAHKDATGGGNLFDSVLEEELAGERVVLEGEHWAAFVAYGAHWPYEVHLYPKRRVPDLLGLDEAARTEFPKVYLELLRRFDRIFGEGEPPTPYIAAWHQAPFGQLEFEGVTRDDFALHLNFSLPPYVRQAEVPRGLRIRHERVHQRDVPPERAAERLREVADVHERE.

Residues 36–72 are disordered; sequence TVTTSEVRRDPLLGDSAPSRLAPQGRTYHPPADQCPL. The Zn(2+) site is built by Cys70, Cys73, and His114. Asn154 is a UDP-alpha-D-glucose binding site. A Zn(2+)-binding site is contributed by His165. The active-site Tele-UMP-histidine intermediate is the His167. The UDP-alpha-D-glucose site is built by Gln169 and Gln332.

It belongs to the galactose-1-phosphate uridylyltransferase type 1 family. The cofactor is Zn(2+).

The enzyme catalyses alpha-D-galactose 1-phosphate + UDP-alpha-D-glucose = alpha-D-glucose 1-phosphate + UDP-alpha-D-galactose. The protein operates within carbohydrate metabolism; galactose metabolism. The polypeptide is Galactose-1-phosphate uridylyltransferase (galT) (Streptomyces lividans).